The primary structure comprises 560 residues: Interferon alpha/beta receptor 1 (560 aa).

An N-terminal signal peptide occupies residues 1-24 (MLSLLGATTLMLVAGRWVLPAASG). Residues 25-437 (EANLKSENVE…EKTKPGNTSK (413 aa)) lie on the Extracellular side of the membrane. N-linked (GlcNAc...) asparagine glycans are attached at residues Asn47 and Asn55. A disulfide bond links Cys76 and Cys84. Residues Asn85, Asn108, Asn109, and Asn172 are each glycosylated (N-linked (GlcNAc...) asparagine). 3 consecutive Fibronectin type-III domains span residues 126–226 (QIGP…TTER), 231–329 (SPEN…TEVK), and 333–433 (FPPV…TKPG). An intrachain disulfide couples Cys199 to Cys220. 5 N-linked (GlcNAc...) asparagine glycosylation sites follow: Asn222, Asn285, Asn313, Asn359, and Asn377. Cysteines 283 and 291 form a disulfide. A disulfide bridge links Cys404 with Cys427. N-linked (GlcNAc...) asparagine glycosylation occurs at Asn434. Residues 438-458 (TWLIAGICTALFSILVVIYVV) form a helical membrane-spanning segment. The Cytoplasmic segment spans residues 459-560 (RVFLRCVKYV…SEEFLQQDSV (102 aa)). The S-palmitoyl cysteine moiety is linked to residue Cys464. Residues Tyr467 and Tyr482 each carry the phosphotyrosine; by TYK2 modification. Residues 492 to 501 (LLSTSEEQTE) form an important for interaction with TYK2 region. Ser496 and Ser536 each carry phosphoserine. Positions 524-560 (VHEEYNSQASQDSGNYSNEDENSGSKISEEFLQQDSV) are disordered. The span at 529 to 540 (NSQASQDSGNYS) shows a compositional bias: polar residues.

Belongs to the type II cytokine receptor family. In terms of assembly, heterodimer with IFNAR2; forming the receptor for type I interferon. Interacts with TYK2. Interacts with STAT1 and STAT2; the interaction requires its phosphorylation at Tyr-482. Interacts (serine-phosphorylated form) with FBXW11, the substrate recognition component of a SCF (SKP1-CUL1-F-box protein) E3 ubiquitin-protein ligase complex. Interacts with SHMT2; this promotes interaction with ABRAXAS2 and the BRISC complex. Interacts with TRIM10; this interaction prevents association between IFNAR1 and TYK2. Ubiquitinated, leading to its internalization and degradation. Polyubiquitinated via 'Lys-48'-linked and 'Lys-63'-linked ubiquitin chains, leading to receptor internalization and lysosomal degradation. The 'Lys-63'-linked ubiquitin chains are cleaved off by the BRISC complex. Post-translationally, phosphorylated on tyrosine residues in response to interferon-binding: phosphorylation by TYK2 tyrosine kinase creates docking sites for STAT proteins. Phosphorylated on serine residues in response to interferon binding; this promotes interaction with FBXW11 and ubiquitination. In terms of processing, palmitoylation at Cys-464 is required for the activation of STAT1 and STAT2. In terms of tissue distribution, expressed in the endometrium. Expressed in all tissues examined except conceptus at day 15 of pregnancy.

Its subcellular location is the cell membrane. The protein localises to the late endosome. The protein resides in the lysosome. In terms of biological role, together with IFNAR2, forms the heterodimeric receptor for type I interferons (including interferons alpha, beta, epsilon, omega and kappa). Type I interferon binding activates the JAK-STAT signaling cascade, resulting in transcriptional activation or repression of interferon-regulated genes that encode the effectors of the interferon response. Mechanistically, type I interferon-binding brings the IFNAR1 and IFNAR2 subunits into close proximity with one another, driving their associated Janus kinases (JAKs) (TYK2 bound to IFNAR1 and JAK1 bound to IFNAR2) to cross-phosphorylate one another. The activated kinases phosphorylate specific tyrosine residues on the intracellular domains of IFNAR1 and IFNAR2, forming docking sites for the STAT transcription factors. STAT proteins are then phosphorylated by the JAKs, promoting their translocation into the nucleus to regulate expression of interferon-regulated genes. Can also act independently of IFNAR2: form an active IFNB1 receptor by itself and activate a signaling cascade that does not involve activation of the JAK-STAT pathway. The sequence is that of Interferon alpha/beta receptor 1 (IFNAR1) from Ovis aries (Sheep).